A 190-amino-acid chain; its full sequence is Inosine triphosphate pyrophosphatase (190 aa).

10-15 (TGNAKK) contacts ITP. Glu40 lines the Mg(2+) pocket. ITP-binding positions include Lys52, 68–69 (DT), Lys85, 144–147 (FGWD), Lys167, and 172–173 (HR).

Belongs to the HAM1 NTPase family. As to quaternary structure, homodimer. Requires Mg(2+) as cofactor. It depends on Mn(2+) as a cofactor.

The protein localises to the cytoplasm. The enzyme catalyses ITP + H2O = IMP + diphosphate + H(+). It carries out the reaction dITP + H2O = dIMP + diphosphate + H(+). It catalyses the reaction XTP + H2O = XMP + diphosphate + H(+). Pyrophosphatase that hydrolyzes non-canonical purine nucleotides such as inosine triphosphate (ITP), deoxyinosine triphosphate (dITP) or xanthosine 5'-triphosphate (XTP) to their respective monophosphate derivatives. The enzyme does not distinguish between the deoxy- and ribose forms. Probably excludes non-canonical purines from RNA and DNA precursor pools, thus preventing their incorporation into RNA and DNA and avoiding chromosomal lesions. This is Inosine triphosphate pyrophosphatase from Culex quinquefasciatus (Southern house mosquito).